A 125-amino-acid polypeptide reads, in one-letter code: Unclassified hydrophobin 8 (125 aa).

The first 20 residues, 1 to 20, serve as a signal peptide directing secretion; it reads MMFSKPVVLATTALATFAAA. Intrachain disulfides connect C31/C105, C38/C99, C39/C90, and C106/C119.

Belongs to the fungal hydrophobin family. As to quaternary structure, self-assembles to form functional amyloid fibrils called rodlets. Self-assembly into fibrillar rodlets occurs spontaneously at hydrophobic:hydrophilic interfaces and the rodlets further associate laterally to form amphipathic monolayers.

The protein resides in the secreted. Its subcellular location is the cell wall. In terms of biological role, aerial growth, conidiation, and dispersal of filamentous fungi in the environment rely upon a capability of their secreting small amphipathic proteins called hydrophobins (HPBs) with low sequence identity. Class I can self-assemble into an outermost layer of rodlet bundles on aerial cell surfaces, conferring cellular hydrophobicity that supports fungal growth, development and dispersal; whereas Class II form highly ordered films at water-air interfaces through intermolecular interactions but contribute nothing to the rodlet structure. Hydph8 is an unclassified hydrophobin involved in mycelial growth. The sequence is that of Unclassified hydrophobin 8 from Pleurotus ostreatus (strain PC15) (Oyster mushroom).